The following is a 1220-amino-acid chain: DNA-directed RNA polymerase subunit beta' (1220 aa).

Cys61, Cys63, Cys76, and Cys79 together coordinate Zn(2+). Mg(2+) contacts are provided by Asp450, Asp452, and Asp454. The tract at residues Gln1197 to Glu1220 is disordered. Positions Pro1209–Glu1220 are enriched in basic and acidic residues.

It belongs to the RNA polymerase beta' chain family. The RNAP catalytic core consists of 2 alpha, 1 beta, 1 beta' and 1 omega subunit. When a sigma factor is associated with the core the holoenzyme is formed, which can initiate transcription. Requires Mg(2+) as cofactor. The cofactor is Zn(2+).

The enzyme catalyses RNA(n) + a ribonucleoside 5'-triphosphate = RNA(n+1) + diphosphate. Functionally, DNA-dependent RNA polymerase catalyzes the transcription of DNA into RNA using the four ribonucleoside triphosphates as substrates. The chain is DNA-directed RNA polymerase subunit beta' from Leuconostoc citreum (strain KM20).